The chain runs to 146 residues: uncharacterized protein (146 aa).

Positions 1–24 (MVIYYGKKNCTLLLLLFILCNIYS) are cleaved as a signal peptide. Residues Asn99 and Asn106 are each glycosylated (N-linked (GlcNAc...) asparagine).

This is an uncharacterized protein from Saccharomyces cerevisiae (strain ATCC 204508 / S288c) (Baker's yeast).